The chain runs to 450 residues: Molybdate-anion transporter (450 aa).

12 consecutive transmembrane segments (helical) span residues 1–21 (MLVT…GLEL), 43–63 (LDFY…APYL), 79–99 (ILYV…SSLV), 128–148 (FVLL…FSAF), 174–194 (AAFW…AVAS), 195–215 (WIGL…ALAG), 249–269 (VLLL…FVFL), 278–298 (GAPL…GSSL), 311–331 (PMHL…MLTF), 344–364 (FIAF…MSFL), 376–396 (GVLN…LLVL), and 409–429 (FSIC…LFTV).

This sequence belongs to the major facilitator superfamily. As to expression, expressed ubiquitously but at relatively higher levels in the olfactory bulb and the skeletal muscle.

Its subcellular location is the cell membrane. Mediates high-affinity intracellular uptake of the rare oligo-element molybdenum. The protein is Molybdate-anion transporter (MFSD5) of Homo sapiens (Human).